The chain runs to 1729 residues: Zinc finger CCCH domain-containing protein 13 (1729 aa).

Disordered regions lie at residues 1 to 40 (MSKI…TTET) and 57 to 156 (CRFI…NGDI). Over residues 10-23 (VENTKTISESTSRR) the composition is skewed to polar residues. Residues 36–64 (STTETQCRNWLKTGSCLYGNTCRFIHGPS) form a C3H1-type zinc finger. Phosphoserine is present on residues Ser64 and Ser77. The segment covering 76 to 136 (RSPERPTGDL…IKIVKERTPE (61 aa)) has biased composition (basic and acidic residues). Positions 162 to 196 (HELSLEMKRQKIQRELMKLEQENMDKREEIIIQKE) form a coiled coil. Residue Lys179 forms a Glycyl lysine isopeptide (Lys-Gly) (interchain with G-Cter in SUMO2) linkage. Positions 182 to 193 (QENMDKREEIII) are enriched in basic and acidic residues. Disordered regions lie at residues 182-528 (QENM…IRDV) and 581-1527 (DVYQ…PISD). Phosphoserine is present on residues Ser198, Ser207, Ser209, and Ser211. Residues 204 to 213 (SKLSPSPSLR) show a composition bias toward low complexity. Residues 214-224 (KSSKSPKRKSS) show a composition bias toward basic residues. Phosphoserine is present on Ser242. Positions 245-254 (LDQQRNSKGN) are enriched in polar residues. Phosphothreonine is present on Thr263. Phosphoserine is present on Ser265. Residues 283 to 315 (KYKVKDRIEEKPRDGKDRGRDFEKQREKRDKPR) show a composition bias toward basic and acidic residues. 4 positions are modified to phosphoserine: Ser316, Ser318, Ser324, and Ser327. The segment covering 321–345 (QHHSPLSSRHHSSSSQSGSSIQRHS) has biased composition (low complexity). A phosphothreonine mark is found at Thr353 and Thr363. Positions 358 to 368 (YQRTLTPSLRR) are enriched in polar residues. Phosphoserine is present on residues Ser369, Ser371, and Ser380. 2 stretches are compositionally biased toward basic and acidic residues: residues 393–528 (PMRE…IRDV) and 581–636 (DVYQ…EKGS). Positions 639-654 (TRGSQMDSHSSGSNYH) are enriched in polar residues. Basic and acidic residues predominate over residues 655-701 (DSWETRSSYPERDRYPERDTRDPARDSSFERRHGERDRRDNRERDQR). The residue at position 704 (Ser704) is a Phosphoserine. Positions 706-865 (IRHQGRSEEL…KERERQREWE (160 aa)) form a coiled coil. Positions 710 to 897 (GRSEELERDE…IPRDSHEERK (188 aa)) are enriched in basic and acidic residues. Residues Ser907, Ser909, Ser913, Ser921, Ser924, Ser929, Ser949, Ser951, and Ser953 each carry the phosphoserine modification. Over residues 920–938 (HSPDSDTYHSGDDKNEKHR) the composition is skewed to basic and acidic residues. Basic and acidic residues predominate over residues 957–1035 (LTEDRQGRWK…GSDRAHDEKK (79 aa)). Position 958 is a phosphothreonine (Thr958). The span at 1036–1046 (KAKAPKKPVKK) shows a compositional bias: basic residues. Positions 1047–1065 (KKEEDVGVERGNLETHEDS) are enriched in basic and acidic residues. 4 positions are modified to phosphoserine: Ser1069, Ser1086, Ser1090, and Ser1093. Over residues 1072–1086 (KGQKKKNIEKKRKRS) the composition is skewed to basic residues. Thr1109 is subject to Phosphothreonine. Basic and acidic residues-rich tracts occupy residues 1114–1137 (IKEE…KKEN) and 1149–1159 (PDRTEGLEAEH). Composition is skewed to low complexity over residues 1160-1176 (TAAT…LSSL) and 1184-1218 (AAAS…TNGS). The span at 1228–1253 (ARGEKVEVSHVTLEDTPHRKLVDQKR) shows a compositional bias: basic and acidic residues. Phosphoserine is present on residues Ser1256, Ser1259, Ser1273, and Ser1275. Residues 1278 to 1288 (SAHRSGDDQGS) are compositionally biased toward basic and acidic residues. A Phosphoserine modification is found at Ser1295. Composition is skewed to basic and acidic residues over residues 1296-1351 (GSRD…DRQV) and 1359-1440 (DSRD…ERTF). A phosphoserine mark is found at Ser1427, Ser1443, Ser1447, Ser1467, Ser1470, Ser1499, and Ser1526. Composition is skewed to basic and acidic residues over residues 1447-1482 (SGKR…DRDL) and 1490-1499 (DVSKAERTES).

The protein belongs to the ZC3H13 family. As to quaternary structure, component of the WMM complex, a N6-methyltransferase complex composed of a catalytic subcomplex, named MAC, and of an associated subcomplex, named MACOM. The MAC subcomplex is composed of METTL3 and METTL14. The MACOM subcomplex is composed of WTAP, ZC3H13, CBLL1/HAKAI, VIRMA, and, in some cases of RBM15 (RBM15 or RBM15B). Also a component of a MACOM-like complex, named WTAP complex, composed of WTAP, ZC3H13, CBLL1/HAKAI, VIRMA, RBM15, BCLAF1 and THRAP3.

The protein localises to the nucleus speckle. It localises to the nucleus. Its subcellular location is the nucleoplasm. Associated component of the WMM complex, a complex that mediates N6-methyladenosine (m6A) methylation of RNAs, a modification that plays a role in the efficiency of mRNA splicing and RNA processing. Acts as a key regulator of m6A methylation by promoting m6A methylation of mRNAs at the 3'-UTR. Controls embryonic stem cells (ESCs) pluripotency via its role in m6A methylation. In the WMM complex, anchors component of the MACOM subcomplex in the nucleus. Also required for bridging WTAP to the RNA-binding component RBM15 (RBM15 or RBM15B). This chain is Zinc finger CCCH domain-containing protein 13, found in Mus musculus (Mouse).